The chain runs to 308 residues: Protease HtpX homolog (308 aa).

A run of 2 helical transmembrane segments spans residues 16–36 (LLSLLVGLGIAALASLIIYAV) and 39–59 (YLFGIYSIGIIFGVFVLVLMM). Residue His149 participates in Zn(2+) binding. Glu150 is a catalytic residue. Residue His153 coordinates Zn(2+). The next 2 helical transmembrane spans lie at 161–181 (VIMAIGLIPTLIFYFAYTTLF) and 192–212 (IILALVLMVVSFLFNIMVLSV). Glu217 is a Zn(2+) binding site.

It belongs to the peptidase M48B family. Zn(2+) is required as a cofactor.

It is found in the cell membrane. This chain is Protease HtpX homolog, found in Thermoplasma volcanium (strain ATCC 51530 / DSM 4299 / JCM 9571 / NBRC 15438 / GSS1).